The sequence spans 1049 residues: Multiple C2 domain and transmembrane region protein 16 (1049 aa).

The region spanning 1–112 (MATTRKLVVE…VGQGEEALIY (112 aa)) is the C2 1 domain. Residues 136–249 (DEKPPPLKPT…PPQNQPDGED (114 aa)) form a disordered region. Composition is skewed to basic and acidic residues over residues 153 to 170 (VEEKTEETKAEGPDESKP) and 226 to 238 (ESDKNEAEAKPVE). 3 consecutive C2 domains span residues 302 to 426 (TSEI…PQWY), 460 to 582 (TAGN…SRWL), and 617 to 745 (VCSD…RNTY). Ca(2+)-binding residues include Ser-338, Asp-390, Thr-393, and Ser-398. A run of 2 helical transmembrane segments spans residues 883–903 (VMLIWFPDLIVPTLAFYLFVI) and 989–1009 (ATGIFVGLCFFVALVLYLVPT).

It belongs to the MCTP family. The cofactor is Ca(2+). As to expression, expressed in the vascular tissues of roots, cotyledons and rosette leaves. Accumulates in roots meristems and shoot apical meristems (SAMs). Observed in flowers.

The protein localises to the endoplasmic reticulum membrane. Functionally, may function as a signaling molecule by regulating the trafficking of other regulators. The sequence is that of Multiple C2 domain and transmembrane region protein 16 from Arabidopsis thaliana (Mouse-ear cress).